A 337-amino-acid chain; its full sequence is Mediator of RNA polymerase II transcription subunit 19 (337 aa).

Disordered regions lie at residues 1-38 (MMSN…KTTI), 155-234 (YVTP…LPGG), and 297-337 (QMSS…MSQF). Residues 28–38 (QDSSGTLKTTI) are compositionally biased toward polar residues. Composition is skewed to basic residues over residues 159 to 171 (ARKH…KQKH) and 208 to 221 (RKKR…KKKN). The stretch at 189 to 223 (LETYEKKHKKQKRHEDDKERKKRKKEKKRKKKNQS) forms a coiled coil. Positions 297 to 309 (QMSSGGLLGSVLG) are enriched in low complexity. Gly residues predominate over residues 310 to 330 (TSGGPGGGGGGGGGGGGGVGG).

It belongs to the Mediator complex subunit 19 family. Component of the Mediator complex.

Its subcellular location is the nucleus. Its function is as follows. Component of the Mediator complex, a coactivator involved in the regulated transcription of nearly all RNA polymerase II-dependent genes. Mediator functions as a bridge to convey information from gene-specific regulatory proteins to the basal RNA polymerase II transcription machinery. Mediator is recruited to promoters by direct interactions with regulatory proteins and serves as a scaffold for the assembly of a functional preinitiation complex with RNA polymerase II and the general transcription factors. This chain is Mediator of RNA polymerase II transcription subunit 19 (MED19), found in Drosophila melanogaster (Fruit fly).